The following is a 277-amino-acid chain: Thymidylate synthase (277 aa).

Residue Arg21 participates in dUMP binding. His51 lines the (6R)-5,10-methylene-5,6,7,8-tetrahydrofolate pocket. 126 to 127 contacts dUMP; sequence RR. Cys159 serves as the catalytic Nucleophile. DUMP contacts are provided by residues 179–182, Asn190, and 220–222; these read RSSD and HAY. Asp182 lines the (6R)-5,10-methylene-5,6,7,8-tetrahydrofolate pocket. (6R)-5,10-methylene-5,6,7,8-tetrahydrofolate is bound at residue Ala276.

Belongs to the thymidylate synthase family. Bacterial-type ThyA subfamily. As to quaternary structure, homodimer.

The protein resides in the cytoplasm. The catalysed reaction is dUMP + (6R)-5,10-methylene-5,6,7,8-tetrahydrofolate = 7,8-dihydrofolate + dTMP. It participates in pyrimidine metabolism; dTTP biosynthesis. Functionally, catalyzes the reductive methylation of 2'-deoxyuridine-5'-monophosphate (dUMP) to 2'-deoxythymidine-5'-monophosphate (dTMP) while utilizing 5,10-methylenetetrahydrofolate (mTHF) as the methyl donor and reductant in the reaction, yielding dihydrofolate (DHF) as a by-product. This enzymatic reaction provides an intracellular de novo source of dTMP, an essential precursor for DNA biosynthesis. This is Thymidylate synthase from Pseudomonas fluorescens (strain SBW25).